We begin with the raw amino-acid sequence, 367 residues long: C-X-C chemokine receptor type 3 (367 aa).

The Extracellular segment spans residues 1 to 56 (MYLEVSERQVLDASDIAFLLENSTSPYDYGENESDFSDSPPCPQDFSLNFDRTFLP). N-linked (GlcNAc...) asparagine glycosylation occurs at asparagine 22. Residues tyrosine 27 and tyrosine 29 each carry the sulfotyrosine modification. N-linked (GlcNAc...) asparagine glycosylation occurs at asparagine 32. A helical transmembrane segment spans residues 57–77 (VLYSLLFLLGLLGNGAVAAVL). Over 78–89 (LSQRTALSSTDT) the chain is Cytoplasmic. Residues 90-110 (FLLHLAVADVLLVLTLPLWAV) form a helical membrane-spanning segment. The Extracellular portion of the chain corresponds to 111 to 125 (DAAAQWVFGSGLCKV). The cysteines at positions 123 and 202 are disulfide-linked. Residues 126 to 146 (AGALFNINFYAGAFLLACISF) form a helical membrane-spanning segment. The Cytoplasmic portion of the chain corresponds to 147–168 (DRYLSIVHATQIYRRDPWVRVA). Residues 169 to 189 (LTCIVVWGLCVLFALPDFIFL) traverse the membrane as a helical segment. Topologically, residues 190-222 (SASHDQRLNATHCQYNFPQVGRTALRVLQLVAG) are extracellular. Asparagine 198 is a glycosylation site (N-linked (GlcNAc...) asparagine). Residues 223-243 (FLMPLLVMAYCYAHILAVLLV) traverse the membrane as a helical segment. Residues 244-255 (SRGQRRFRAMRL) lie on the Cytoplasmic side of the membrane. A helical transmembrane segment spans residues 256–276 (VVVVVVAFAVCWTPYHLVVLV). Residues 277–300 (DILMDVGVLARNCGRESHVDVAKS) lie on the Extracellular side of the membrane. Residues 301-321 (VTSGMGYMHCCLNPLLYAFVG) form a helical membrane-spanning segment. Residues 322–367 (VKFKEQMWMLLMRLGRSDQRGPQRQPSSSRRESSWSETTEASYLGL) are Cytoplasmic-facing. A disordered region spans residues 339-367 (DQRGPQRQPSSSRRESSWSETTEASYLGL).

Belongs to the G-protein coupled receptor 1 family. As to quaternary structure, homomer. Forms heteromers with ACKR4. Interacts with PF4/CXCL4. Post-translationally, sulfation on Tyr-27 and Tyr-29 is essential for CXCL10 binding. In terms of processing, N-glycosylated.

It localises to the cell membrane. Functionally, receptor for the C-X-C chemokine CXCL9, CXCL10 and CXCL11 and mediates the proliferation, survival and angiogenic activity of mesangial cells through a heterotrimeric G-protein signaling pathway. Probably promotes cell chemotaxis response. Binds to CCL21. Upon activation by PF4, induces activated T-lymphocytes migration mediated via downstream Ras/extracellular signal-regulated kinase (ERK) signaling. This is C-X-C chemokine receptor type 3 (Cxcr3) from Rattus norvegicus (Rat).